Consider the following 810-residue polypeptide: Phospholipase D alpha 1 (810 aa).

Residues 1-126 form the C2 domain; sequence MAQHLLHGTL…INGEEVDQWV (126 aa). Residue Asp-187 participates in Ca(2+) binding. The PLD phosphodiesterase 1 domain maps to 327–366; sequence TMFTHHQKIVVVDSEMPSRGGSEMRRIVSFVGGIDLCDGR. Catalysis depends on residues His-332, Lys-334, and Asp-339. His-332 contacts a 1,2-diacyl-sn-glycero-3-phosphate. Ca(2+) is bound by residues His-372 and His-406. 2 residues coordinate a 1,2-diacyl-sn-glycero-3-phosphate: Gln-522 and His-661. In terms of domain architecture, PLD phosphodiesterase 2 spans 656–683; sequence FMIYVHTKMMIVDDEYIIIGSANINQRS. Active-site residues include His-661, Lys-663, and Asp-668. Ca(2+) is bound at residue Glu-722.

It belongs to the phospholipase D family. C2-PLD subfamily. As to quaternary structure, interacts with GPA1. This binding inhibits PLDALPHA1 activity and is relieved by GTP. Ca(2+) is required as a cofactor. As to expression, highly expressed in roots, stems and flowers, moderately in leaves, seedlings and siliques. Not detected in seeds.

It localises to the cytoplasm. The protein localises to the cell membrane. The protein resides in the mitochondrion membrane. It is found in the microsome membrane. Its subcellular location is the vacuole. It localises to the cytoplasmic vesicle. The protein localises to the clathrin-coated vesicle. It carries out the reaction a 1,2-diacyl-sn-glycero-3-phosphocholine + H2O = a 1,2-diacyl-sn-glycero-3-phosphate + choline + H(+). Its activity is regulated as follows. Not inhibited by neomycin. Functionally, hydrolyzes glycerol-phospholipids at the terminal phosphodiesteric bond to generate phosphatidic acids (PA). Plays an important role in various cellular processes, including phytohormone action and response to stress, characterized by acidification of the cell. Involved in wound induction of jasmonic acid. May be involved in membrane lipid remodeling. Probably involved in freezing tolerance by modulating the cold-responsive genes and accumulation of osmolytes. Can use phosphatidylcholine (PC), phosphatidylethanolamine (PE) and phosphatidylglycerol (PG) as substrates, both in presence or in absence of PIP2. Its main substrate is phosphatidylcholine. Stimulates the intrinsic GTPase activity of GPA1 upon binding. Mediates the abscisic acid effects on stomata through interaction with GPA1 and the production of phosphatidic acid that bind to ABI1. Involved in seed aging and deterioration. Involved in microtubule stabilization and salt tolerance. Involved in abscisic acid-induced stomatal closure. This is Phospholipase D alpha 1 from Arabidopsis thaliana (Mouse-ear cress).